A 231-amino-acid polypeptide reads, in one-letter code: Ribosyldihydronicotinamide dehydrogenase [quinone] (231 aa).

Residues H12, F18–S21, and L104–F107 contribute to the FAD site. F127–I129 provides a ligand contact to substrate. FAD is bound by residues T148 to G151 and Y156. Positions 174 and 178 each coordinate Zn(2+). D194 provides a ligand contact to FAD. S197 is subject to Phosphoserine. FAD is bound at residue R201. A Zn(2+)-binding site is contributed by C223.

Belongs to the NAD(P)H dehydrogenase (quinone) family. As to quaternary structure, homodimer. It depends on Zn(2+) as a cofactor. Requires FAD as cofactor.

Its subcellular location is the cytoplasm. The catalysed reaction is 1-(beta-D-ribofuranosyl)-1,4-dihydronicotinamide + a quinone + H(+) = beta-nicotinamide D-riboside + a quinol. Its function is as follows. The enzyme apparently serves as a quinone reductase in connection with conjugation reactions of hydroquinones involved in detoxification pathways as well as in biosynthetic processes such as the vitamin K-dependent gamma-carboxylation of glutamate residues in prothrombin synthesis. The sequence is that of Ribosyldihydronicotinamide dehydrogenase [quinone] (Nqo2) from Mus musculus (Mouse).